We begin with the raw amino-acid sequence, 295 residues long: GTPase Era (295 aa).

Positions 7-176 constitute an Era-type G domain; sequence KTVSVCIIGR…ITSKAKIAPW (170 aa). Residues 15 to 22 are G1; sequence GRPNSGKS. 15–22 lines the GTP pocket; sequence GRPNSGKS. The segment at 41–45 is G2; the sequence is QTTRS. Positions 62–65 are G3; it reads DTPG. Residues 62–66 and 124–127 each bind GTP; these read DTPGI and NKID. The interval 124 to 127 is G4; it reads NKID. A G5 region spans residues 152–154; the sequence is ISA. The KH type-2 domain maps to 204–281; the sequence is LQQELPYKLT…HLFLFVKVRE (78 aa).

It belongs to the TRAFAC class TrmE-Era-EngA-EngB-Septin-like GTPase superfamily. Era GTPase family. Monomer.

It is found in the cytoplasm. The protein localises to the cell inner membrane. In terms of biological role, an essential GTPase that binds both GDP and GTP, with rapid nucleotide exchange. Plays a role in 16S rRNA processing and 30S ribosomal subunit biogenesis and possibly also in cell cycle regulation and energy metabolism. The polypeptide is GTPase Era (Rickettsia bellii (strain OSU 85-389)).